Reading from the N-terminus, the 151-residue chain is Linear element protein Mug20 (151 aa).

The stretch at 56-140 (EEKLRALDKL…CAMEKLKMIE (85 aa)) forms a coiled coil.

Component of linear elements (LinEs), which are similar to synaptonemal complexes, at least composed of rec27, rec25, rec10 and mug20. Interacts with rec10.

The protein localises to the cytoplasm. It localises to the nucleus. It is found in the chromosome. Functionally, during meiotic DNA recombination, binds to and may help activate DNA double-strand break (DSB) hotspot sites. This chain is Linear element protein Mug20, found in Schizosaccharomyces pombe (strain 972 / ATCC 24843) (Fission yeast).